We begin with the raw amino-acid sequence, 320 residues long: o-succinylbenzoate synthase (320 aa).

The active-site Proton donor is Lys-133. Positions 161, 190, and 213 each coordinate Mg(2+). Residue Lys-235 is the Proton acceptor of the active site.

The protein belongs to the mandelate racemase/muconate lactonizing enzyme family. MenC type 1 subfamily. A divalent metal cation serves as cofactor.

It catalyses the reaction (1R,6R)-6-hydroxy-2-succinyl-cyclohexa-2,4-diene-1-carboxylate = 2-succinylbenzoate + H2O. It functions in the pathway quinol/quinone metabolism; 1,4-dihydroxy-2-naphthoate biosynthesis; 1,4-dihydroxy-2-naphthoate from chorismate: step 4/7. The protein operates within quinol/quinone metabolism; menaquinone biosynthesis. Its function is as follows. Converts 2-succinyl-6-hydroxy-2,4-cyclohexadiene-1-carboxylate (SHCHC) to 2-succinylbenzoate (OSB). The sequence is that of o-succinylbenzoate synthase from Escherichia coli O17:K52:H18 (strain UMN026 / ExPEC).